A 1010-amino-acid chain; its full sequence is Collagen, type I, alpha 1b (1010 aa).

Residues 1-24 show a composition bias toward pro residues; that stretch reads SSGPPQPGPMGPMGPRGPPGPPGS. The tract at residues 1-969 is disordered; the sequence is SSGPPQPGPM…PDGTQKSPAR (969 aa). Positions 25–48 are enriched in low complexity; sequence SGPQGFTGPPGEPGEPGASGAMGS. A compositionally biased stretch (basic and acidic residues) spans 58–72; it reads NGDDGEPGKPGRPGE. The segment covering 73-82 has biased composition (low complexity); it reads RGAAGPQGAR. The span at 145-159 shows a compositional bias: pro residues; it reads GGPPGPTGPAGPPGF. Gly residues-rich tracts occupy residues 160-179 and 203-212; these read PGGAGVKGETGPAGGRGNEG and GTDGGPGAKG. Composition is skewed to low complexity over residues 213–268 and 300–310; these read SPGA…PGPA and ERGAPGARGFP. A compositionally biased stretch (gly residues) spans 311 to 323; it reads GADGGAGGKGAPG. 2 stretches are compositionally biased toward low complexity: residues 324–343 and 405–448; these read ERGATGESGSPGAPGAPGSK and PAGA…APGE. 3 stretches are compositionally biased toward gly residues: residues 468 to 477, 486 to 495, and 519 to 528; these read GAPGLGGPTG, GAPGGLGAPG, and GGKGGDGAPG. Composition is skewed to low complexity over residues 559–568 and 581–596; these read VAGPTGPRGA and AGFAGPPGADGQPGAK. Gly residues-rich tracts occupy residues 609-618 and 633-642; these read GAPGPGGPVG and GARGGAGPPG. Low complexity-rich tracts occupy residues 643–662, 679–701, and 796–805; these read ATGFPGPAGRVGPSGPAGAA, ETGAAGRPGEAGAAGAPGPSGEK, and APGAVGPSGK. Residues 834-847 show a composition bias toward basic and acidic residues; sequence KGDRGEAGEAGDRG. Residues 872–900 are compositionally biased toward low complexity; it reads PAGASGPAGPRGPAGSNGAAGKDGMNGLP. Positions 918-933 are enriched in pro residues; that stretch reads AGPPGPPGPAGPPGPP. A Fibrillar collagen NC1 domain is found at 982-1010; the sequence is RLPLLDLAPMDVGAPDQEFGVEVGPVCFL.

This sequence belongs to the fibrillar collagen family.

It localises to the secreted. It is found in the extracellular space. The protein localises to the extracellular matrix. This chain is Collagen, type I, alpha 1b, found in Epinephelus marginatus (Dusky grouper).